The sequence spans 756 residues: Virulence factor MDV010 (756 aa).

A signal peptide spans 1-30 (MPSKSIADHHAGYGVALAIVALLLIHGTAL). The disordered stretch occupies residues 96–120 (EEHITLSSPRTSTKTTNENGHEKDS). Residues 100-113 (TLSSPRTSTKTTNE) show a composition bias toward polar residues. Residues Asn-222, Asn-241, Asn-287, Asn-423, Asn-495, Asn-542, Asn-552, Asn-580, Asn-660, Asn-684, Asn-715, and Asn-744 are each glycosylated (N-linked (GlcNAc...) asparagine; by host).

It localises to the secreted. Its function is as follows. May play a role in host immune modulation since the protein is secreted and provides an advantage for growth in vivo while it is completely dispensable in cell culture. This is Virulence factor MDV010 (MDV010) from Gallid herpesvirus 2 (strain Chicken/Md5/ATCC VR-987) (GaHV-2).